The sequence spans 195 residues: Fe/S biogenesis protein NfuA (195 aa).

[4Fe-4S] cluster is bound by residues C152 and C155.

Belongs to the NfuA family. As to quaternary structure, homodimer. It depends on [4Fe-4S] cluster as a cofactor.

Its function is as follows. Involved in iron-sulfur cluster biogenesis. Binds a 4Fe-4S cluster, can transfer this cluster to apoproteins, and thereby intervenes in the maturation of Fe/S proteins. Could also act as a scaffold/chaperone for damaged Fe/S proteins. The polypeptide is Fe/S biogenesis protein NfuA (Vibrio cholerae serotype O1 (strain ATCC 39541 / Classical Ogawa 395 / O395)).